A 371-amino-acid chain; its full sequence is Peptide chain release factor 2 (371 aa).

Glutamine 250 bears the N5-methylglutamine mark.

The protein belongs to the prokaryotic/mitochondrial release factor family. Post-translationally, methylated by PrmC. Methylation increases the termination efficiency of RF2.

It is found in the cytoplasm. In terms of biological role, peptide chain release factor 2 directs the termination of translation in response to the peptide chain termination codons UGA and UAA. This chain is Peptide chain release factor 2, found in Paramagnetospirillum magneticum (strain ATCC 700264 / AMB-1) (Magnetospirillum magneticum).